The chain runs to 166 residues: Large ribosomal subunit protein uL10 (166 aa).

This sequence belongs to the universal ribosomal protein uL10 family. Part of the ribosomal stalk of the 50S ribosomal subunit. The N-terminus interacts with L11 and the large rRNA to form the base of the stalk. The C-terminus forms an elongated spine to which L12 dimers bind in a sequential fashion forming a multimeric L10(L12)X complex.

In terms of biological role, forms part of the ribosomal stalk, playing a central role in the interaction of the ribosome with GTP-bound translation factors. The sequence is that of Large ribosomal subunit protein uL10 from Pseudomonas fluorescens (strain Pf0-1).